A 511-amino-acid polypeptide reads, in one-letter code: MTITLHPGSVSLKQLAEIYWSGEPAKLDASFDAGILKAAARIAEIAAGNAPVYGINTGFGKLASIKIDSADVATLQRNLILSHCCGVGQPLPENVVRLIMSLKLVSLGRGASGVRLELVRLIEGMLAKGVVPVIPEKGSVGASGDLAPLAHMTAVMMGHGEAFYAGERLDGAAALEKAGLTPVVLAAKEGLALINGTQVSTALALAGLFRAHRAAQAALITGAMSTDAAMGSSAPFHPDIHTLRGHQGQIDTAAALRGLLAGSVIRESHIEGDERVQDPYCIRCQPQVDGACLDLLRSVGRTLEIEANAVTDNPLVLSDNSVVSGGNFHAEPVAFAADQIAIAVCEIGAISQRRIALLVDPALSYGLPAFLAKKPGLNSGLMIAEVTSAALMSENKQMSHPASVDSTPTSANQEDHVSMACHGARRLLQMTDNLFGIVGIEALTAAQGVEFRAPLATSPELTLAIATIRSVVPTLDVDRYMANDLKAASDLVASGALNASVSADILPSLEI.

The segment at residues 142–144 is a cross-link (5-imidazolinone (Ala-Gly)); it reads ASG. At serine 143 the chain carries 2,3-didehydroalanine (Ser).

This sequence belongs to the PAL/histidase family. Contains an active site 4-methylidene-imidazol-5-one (MIO), which is formed autocatalytically by cyclization and dehydration of residues Ala-Ser-Gly.

The protein resides in the cytoplasm. The enzyme catalyses L-histidine = trans-urocanate + NH4(+). The protein operates within amino-acid degradation; L-histidine degradation into L-glutamate; N-formimidoyl-L-glutamate from L-histidine: step 1/3. This is Histidine ammonia-lyase from Rhizobium rhizogenes (strain K84 / ATCC BAA-868) (Agrobacterium radiobacter).